Here is a 1186-residue protein sequence, read N- to C-terminus: Tricalbin-1 (1186 aa).

The interval 1–50 (MAKEDTGVTAPKKPETAQVANINGIDKLEPPKTKEETESSKSVSSEKAAH) is disordered. Residues 1–106 (MAKEDTGVTA…NIIPDSLYGD (106 aa)) are Cytoplasmic-facing. The span at 26–39 (DKLEPPKTKEETES) shows a compositional bias: basic and acidic residues. A helical membrane pass occupies residues 107–127 (WYHSVAIFFIGGVASFALGHY). A topological domain (extracellular) is located at residue lysine 128. The chain crosses the membrane as a helical span at residues 129–149 (FSMGSAFFVIVITSLLYRTSA). At 150–1186 (KKYRGSIREL…HEMGEEETKF (1037 aa)) the chain is on the cytoplasmic side. One can recognise an SMP-LTD domain in the interval 172–375 (DYESLEWLNA…PPFSLQLNIP (204 aa)). 3 consecutive C2 domains span residues 366–487 (PPFS…RNLK), 512–636 (EKKL…IKIT), and 640–757 (RPVR…DKYE). Positions 795 to 822 (LEEIQDLDKVNKKKKALELRKSAIDEKK) form a coiled coil. Positions 976–1094 (PIDTKQLPAN…KVEGTTELDV (119 aa)) constitute a C2 4 domain. A Phosphoserine modification is found at serine 1000. Aspartate 1008, aspartate 1014, aspartate 1064, aspartate 1066, serine 1069, and aspartate 1072 together coordinate Ca(2+).

It belongs to the tricalbin family. As to quaternary structure, interacts with TCB2 via its C-terminal domain. Ca(2+) is required as a cofactor.

The protein localises to the cell membrane. It is found in the endoplasmic reticulum membrane. Functionally, may play a role in membrane trafficking. This chain is Tricalbin-1 (TCB1), found in Saccharomyces cerevisiae (strain ATCC 204508 / S288c) (Baker's yeast).